Here is a 504-residue protein sequence, read N- to C-terminus: Deoxyguanosinetriphosphate triphosphohydrolase (504 aa).

One can recognise an HD domain in the interval 66 to 273; that stretch reads RLTHSLEVQQ…MEAADDISYC (208 aa).

This sequence belongs to the dGTPase family. Type 1 subfamily. Homotetramer. It depends on Mg(2+) as a cofactor.

It catalyses the reaction dGTP + H2O = 2'-deoxyguanosine + triphosphate + H(+). Its function is as follows. dGTPase preferentially hydrolyzes dGTP over the other canonical NTPs. This chain is Deoxyguanosinetriphosphate triphosphohydrolase, found in Klebsiella pneumoniae subsp. pneumoniae (strain ATCC 700721 / MGH 78578).